The primary structure comprises 111 residues: MAVKIRLARGGAKKRPFYRVVVANATAPRDGDFLEKVGTYNPMLAKDSNERVVLKADRVEYWLKSGAKPTDRVARFIEQAGIALPEKVKKEMEVKLKNRKAKPSKKEAKEA.

This sequence belongs to the bacterial ribosomal protein bS16 family.

This is Small ribosomal subunit protein bS16 from Rickettsia bellii (strain OSU 85-389).